A 252-amino-acid chain; its full sequence is Chaplin-A (252 aa).

The N-terminal stretch at 1 to 20 (MVAAAAATGILSLCGSPALA) is a signal peptide. The region spanning 31–71 (SPGAVSGNALQVPVDVPVNACGNTVDVIAALNPAFGNECEN) is the Chaplin 1 domain. Disordered regions lie at residues 71 to 121 (NASD…GNNA) and 150 to 224 (CEND…GSEG). A compositionally biased stretch (low complexity) spans 86 to 108 (EDASSSSSSSTSASSSGSHADGA). The region spanning 112 to 152 (SPGVGSGNNAQVPVDVPVNLCGNTVDVIAALNPVFGNKCEN) is the Chaplin 2 domain. Positions 153–165 (DAEEPPGYGEEEP) are enriched in acidic residues. A compositionally biased stretch (low complexity) spans 210 to 224 (QTEQPPALAETGSEG). The LPXTG sorting signal motif lies at 217-221 (LAETG). 2 propeptides (removed by sortase) span residues 219–252 (ETGS…LSGR) and 221–252 (GSEG…LSGR). Threonine 220 is modified (pentaglycyl murein peptidoglycan amidated threonine).

It belongs to the chaplin family. Long chaplin subfamily.

It is found in the secreted. Its subcellular location is the cell wall. In terms of biological role, one of 8 partially redundant surface-active proteins required for efficient formation of aerial mycelium; the short chaplins assemble into a hydrophobic, amyloidal fibrillar surface layer that envelopes and protects aerial hyphae and spores, presumably anchored to the long chaplins. Chaplins have an overlapping function with the surface-active SapB peptide; chaplins are essential on minimal medium while on rich medium both chaplins and SapB are required for efficient aerial hyphae formation. A minimal chaplin strain capable of forming aerial mycelium/hyphae on minimal medium contains ChpC, ChpE and ChpH. The strain also has restored rodlet formation on the hyphae surface. A second minimal chaplin strain with ChpA, ChpD and ChpE makes slightly less robust hyphae. The long chaplins (ChpA, ChpB, ChpC) are not absolutely necessary for short chaplin localization or rodlet formation, but probably play a role in initiating aerial hyphae development. Chaplins are also involved in cell attachment to a hydrophobic surface. The polypeptide is Chaplin-A (Streptomyces coelicolor (strain ATCC BAA-471 / A3(2) / M145)).